The chain runs to 611 residues: Leukotriene A-4 hydrolase (611 aa).

Residue K73 is modified to N6-acetyllysine. Residues 135–137 (QCQ) and 267–272 (PYGGME) each bind a peptide. H296 contacts Zn(2+). E297 acts as the Proton acceptor in catalysis. Zn(2+) contacts are provided by H300 and E319. K337 is subject to N6-acetyllysine. Y384 serves as the catalytic Proton donor. K414 carries the N6-acetyllysine modification. Phosphoserine is present on S416. A peptide is bound at residue 564–566 (RMK). At K573 the chain carries N6-acetyllysine.

Belongs to the peptidase M1 family. As to quaternary structure, monomer. Requires Zn(2+) as cofactor. Post-translationally, phosphorylation at Ser-416 inhibits leukotriene-A4 hydrolase activity. activity.

The protein resides in the cytoplasm. It catalyses the reaction leukotriene A4 + H2O = leukotriene B4. It carries out the reaction (5S,6S)-epoxy-(18R)-hydroxy-(7E,9E,11Z,14Z,16E)-eicosapentaenoate + H2O = resolvin E1. The enzyme catalyses (5S,6S)-epoxy-(18S)-hydroxy-(7E,9E,11Z,14Z,16E)-eicosapentaenoate + H2O = 18S-resolvin E1. The catalysed reaction is Release of the N-terminal residue from a tripeptide.. Its pathway is lipid metabolism; leukotriene B4 biosynthesis. Inhibited by bestatin. The epoxide hydrolase activity is restrained by suicide inactivation that involves binding of LTA4 to Tyr-379. 4-(4-benzylphenyl)thiazol-2-amine (ARM1) selectively inhibits the epoxide hydrolase activity. Bifunctional zinc metalloenzyme that comprises both epoxide hydrolase (EH) and aminopeptidase activities. Acts as an epoxide hydrolase to catalyze the conversion of LTA4 to the pro-inflammatory mediator leukotriene B4 (LTB4). Also has aminopeptidase activity, with high affinity for N-terminal arginines of various synthetic tripeptides. In addition to its pro-inflammatory EH activity, may also counteract inflammation by its aminopeptidase activity, which inactivates by cleavage another neutrophil attractant, the tripeptide Pro-Gly-Pro (PGP), a bioactive fragment of collagen generated by the action of matrix metalloproteinase-9 (MMP9) and prolylendopeptidase (PREPL). Involved also in the biosynthesis of resolvin E1 and 18S-resolvin E1 from eicosapentaenoic acid, two lipid mediators that show potent anti-inflammatory and pro-resolving actions. This Bos taurus (Bovine) protein is Leukotriene A-4 hydrolase (LTA4H).